Reading from the N-terminus, the 167-residue chain is Phospholipase A2 heteromtoxin (167 aa).

Tryptophan 38, glycine 40, and glycine 42 together coordinate Ca(2+). Disulfide bonds link cysteine 39–cysteine 61, cysteine 60–cysteine 99, cysteine 67–cysteine 92, cysteine 90–cysteine 127, and cysteine 132–cysteine 144. Histidine 64 is a catalytic residue. Aspartate 65 is a Ca(2+) binding site. Residues 136–140 constitute a propeptide that is removed on maturation; that stretch reads GRSAR.

The protein belongs to the phospholipase A2 family. Group III subfamily. In terms of assembly, heterodimer composed of a large and a small subunits; disulfide-linked. It depends on Ca(2+) as a cofactor. Expressed by the venom gland.

Its subcellular location is the secreted. It catalyses the reaction a 1,2-diacyl-sn-glycero-3-phosphocholine + H2O = a 1-acyl-sn-glycero-3-phosphocholine + a fatty acid + H(+). Functionally, phospholipase toxin, which catalyzes the calcium-dependent hydrolysis of the 2-acyl groups in 3-sn-phosphoglycerides. Inhibits both skeletal (RYR1) and cardiac (RYR2) ryanodine receptors (calcium release channels). Probably blocks ryanodine receptors by generating a lipid product. The chain is Phospholipase A2 heteromtoxin from Heterometrus laoticus (Thai giant scorpion).